The chain runs to 195 residues: MIPLVLEESGGSERVFDIYSRLLRERIIFLGEQVTSETANRIVAQLLFLEAEDPDKDIYMYINSPGGSVYDGLGIFDTMQHVKPDIHTVCVGLAASMGAFLLAAGTKGKRSSLRHSRIMIHQPLGGARGQASDIRIQADEILFLKERLNTELSERTGKDYETIKEDTDRDFYMSPSEAVEYGLIDLVLDKKPVKV.

Catalysis depends on Ser-96, which acts as the Nucleophile. The active site involves His-121.

It belongs to the peptidase S14 family. Fourteen ClpP subunits assemble into 2 heptameric rings which stack back to back to give a disk-like structure with a central cavity, resembling the structure of eukaryotic proteasomes.

It localises to the cytoplasm. The enzyme catalyses Hydrolysis of proteins to small peptides in the presence of ATP and magnesium. alpha-casein is the usual test substrate. In the absence of ATP, only oligopeptides shorter than five residues are hydrolyzed (such as succinyl-Leu-Tyr-|-NHMec, and Leu-Tyr-Leu-|-Tyr-Trp, in which cleavage of the -Tyr-|-Leu- and -Tyr-|-Trp bonds also occurs).. Its function is as follows. Cleaves peptides in various proteins in a process that requires ATP hydrolysis. Has a chymotrypsin-like activity. Plays a major role in the degradation of misfolded proteins. The polypeptide is ATP-dependent Clp protease proteolytic subunit 1 (Prochlorococcus marinus (strain MIT 9312)).